The primary structure comprises 529 residues: Chromosomal replication initiator protein DnaA (529 aa).

Residues 1-72 (MQDFWHAASA…SLACDYWEAT (72 aa)) are domain I, interacts with DnaA modulators. Positions 72–192 (TVDVQFVLDP…HVDDSVHERS (121 aa)) are domain II. The domain III, AAA+ region stretch occupies residues 193-409 (RLNQILTFDN…GALRKILAYS (217 aa)). The ATP site is built by Gly-237, Gly-239, Lys-240, and Thr-241. Residues 410 to 529 (NFHGKEITIE…LHVLEQTLKG (120 aa)) form a domain IV, binds dsDNA region.

It belongs to the DnaA family. Oligomerizes as a right-handed, spiral filament on DNA at oriC.

It localises to the cytoplasm. In terms of biological role, plays an essential role in the initiation and regulation of chromosomal replication. ATP-DnaA binds to the origin of replication (oriC) to initiate formation of the DNA replication initiation complex once per cell cycle. Binds the DnaA box (a 9 base pair repeat at the origin) and separates the double-stranded (ds)DNA. Forms a right-handed helical filament on oriC DNA; dsDNA binds to the exterior of the filament while single-stranded (ss)DNA is stabiized in the filament's interior. The ATP-DnaA-oriC complex binds and stabilizes one strand of the AT-rich DNA unwinding element (DUE), permitting loading of DNA polymerase. After initiation quickly degrades to an ADP-DnaA complex that is not apt for DNA replication. Binds acidic phospholipids. The chain is Chromosomal replication initiator protein DnaA from Ralstonia pickettii (strain 12J).